The following is a 173-amino-acid chain: Translation initiation factor IF-3 (173 aa).

It belongs to the IF-3 family. In terms of assembly, monomer.

The protein resides in the cytoplasm. In terms of biological role, IF-3 binds to the 30S ribosomal subunit and shifts the equilibrium between 70S ribosomes and their 50S and 30S subunits in favor of the free subunits, thus enhancing the availability of 30S subunits on which protein synthesis initiation begins. The polypeptide is Translation initiation factor IF-3 (Aromatoleum aromaticum (strain DSM 19018 / LMG 30748 / EbN1) (Azoarcus sp. (strain EbN1))).